The following is a 453-amino-acid chain: Bestrophin homolog 5 (453 aa).

A run of 4 helical transmembrane segments spans residues 78 to 98, 113 to 133, 275 to 295, and 314 to 334; these read ELIVWICAYSLVSVIYRFALT, DARMGYLPLNFVLGFFCNIII, IPLMYPQLVNMAVHTYFFLCI, and LYIPFMTIIEFIFYMGWLKVA.

This sequence belongs to the anion channel-forming bestrophin (TC 1.A.46) family. Calcium-sensitive chloride channel subfamily. Forms oligomers.

It is found in the cell membrane. Functionally, forms chloride channels. This Caenorhabditis elegans protein is Bestrophin homolog 5 (best-5).